The chain runs to 199 residues: Charged multivesicular body protein 1b (199 aa).

Coiled-coil stretches lie at residues 15-42 and 178-199; these read AKEL…AIQK and TSVA…RDQV. The tract at residues 167–199 is disordered; that stretch reads ELPQGQTGSVGTSVASTEQDELSQRLARLRDQV. Residues 170 to 183 show a composition bias toward polar residues; the sequence is QGQTGSVGTSVAST. The short motif at 186–196 is the MIT-interacting motif element; the sequence is DELSQRLARLR.

It belongs to the SNF7 family.

It localises to the cytoplasm. The protein localises to the cytosol. Its subcellular location is the endosome. It is found in the late endosome membrane. In terms of biological role, probable peripherally associated component of the endosomal sorting required for transport complex III (ESCRT-III) which is involved in multivesicular bodies (MVBs) formation and sorting of endosomal cargo proteins into MVBs. MVBs contain intraluminal vesicles (ILVs) that are generated by invagination and scission from the limiting membrane of the endosome and mostly are delivered to lysosomes enabling degradation of membrane proteins, such as stimulated growth factor receptors, lysosomal enzymes and lipids. The sequence is that of Charged multivesicular body protein 1b (chmp1b) from Xenopus tropicalis (Western clawed frog).